We begin with the raw amino-acid sequence, 197 residues long: Beta-crystallin A2 (197 aa).

Residues 1 to 11 are N-terminal arm; it reads MSSAPAQGPAP. 2 Beta/gamma crystallin 'Greek key' domains span residues 12 to 52 and 53 to 99; these read ASLT…KVEN and GAWV…RPVL. Residues 100–105 are connecting peptide; sequence CANHSD. 2 consecutive Beta/gamma crystallin 'Greek key' domains span residues 106 to 147 and 148 to 196; these read SRVT…KVSS and GAWV…RRVQ.

This sequence belongs to the beta/gamma-crystallin family. In terms of assembly, homo/heterodimer, or complexes of higher-order. The structure of beta-crystallin oligomers seems to be stabilized through interactions between the N-terminal arms.

In terms of biological role, crystallins are the dominant structural components of the vertebrate eye lens. In Bos taurus (Bovine), this protein is Beta-crystallin A2 (CRYBA2).